Consider the following 448-residue polypeptide: Probable xyloglucan 6-xylosyltransferase 1 (448 aa).

The Cytoplasmic segment spans residues 1 to 19; that stretch reads MWVAERVVGERRMREIQRF. Residues 20–42 form a helical; Signal-anchor for type II membrane protein membrane-spanning segment; the sequence is ARNAKLTVVCLLLTVVVLRGTVG. Residues 43 to 448 are Lumenal-facing; that stretch reads AGKFGTPQQD…AFKAMKTTST (406 aa). Residues 71–113 form a disordered region; the sequence is HHDALSRGGGSSSSSGRAAQRDDEPDPPPRTLRDPPYTLGPKI. Asparagine 421 carries an N-linked (GlcNAc...) asparagine glycan.

This sequence belongs to the glycosyltransferase 34 family.

It is found in the golgi apparatus membrane. The enzyme catalyses Transfers an alpha-D-xylosyl residue from UDP-D-xylose to a glucose residue in xyloglucan, forming an alpha-(1-&gt;6)-D-xylosyl-D-glucose linkage.. In terms of biological role, probable xyloglucan xylosyltransferase involved in the biosynthesis of xyloglucan in roots. This Oryza sativa subsp. indica (Rice) protein is Probable xyloglucan 6-xylosyltransferase 1.